Consider the following 1177-residue polypeptide: uncharacterized protein (1177 aa).

The signal sequence occupies residues 1-26 (MKKLLKKSKFWWFLLCGLSVSTILVA). A lipid anchor (N-palmitoyl cysteine) is attached at C27. C27 is lipidated: S-diacylglycerol cysteine.

The protein belongs to the MG307/MG309/MG338 family.

The protein localises to the cell membrane. This is an uncharacterized protein from Mycoplasma genitalium (strain ATCC 33530 / DSM 19775 / NCTC 10195 / G37) (Mycoplasmoides genitalium).